The chain runs to 247 residues: Triosephosphate isomerase (247 aa).

9–11 (NWK) provides a ligand contact to substrate. H93 functions as the Electrophile in the catalytic mechanism. E163 functions as the Proton acceptor in the catalytic mechanism. Residues G169, S209, and 230 to 231 (GG) each bind substrate.

This sequence belongs to the triosephosphate isomerase family. As to quaternary structure, homodimer.

It is found in the cytoplasm. The catalysed reaction is D-glyceraldehyde 3-phosphate = dihydroxyacetone phosphate. It functions in the pathway carbohydrate biosynthesis; gluconeogenesis. It participates in carbohydrate degradation; glycolysis; D-glyceraldehyde 3-phosphate from glycerone phosphate: step 1/1. Functionally, involved in the gluconeogenesis. Catalyzes stereospecifically the conversion of dihydroxyacetone phosphate (DHAP) to D-glyceraldehyde-3-phosphate (G3P). The polypeptide is Triosephosphate isomerase (Dinoroseobacter shibae (strain DSM 16493 / NCIMB 14021 / DFL 12)).